The chain runs to 377 residues: Dihydroorotate dehydrogenase (quinone) (377 aa).

Residues 78–82 (AGCDK) and Ala-102 each bind FMN. Substrate is bound at residue Lys-82. Residue 127 to 130 (NRLG) participates in substrate binding. FMN is bound by residues Asn-159 and Asn-192. Asn-192 is a binding site for substrate. Catalysis depends on Ser-195, which acts as the Nucleophile. Position 197 (Asn-197) interacts with substrate. FMN-binding residues include Lys-230 and Thr-258. Position 259-260 (259-260 (NT)) interacts with substrate. Residues Gly-288, Gly-317, and 338-339 (YT) contribute to the FMN site.

It belongs to the dihydroorotate dehydrogenase family. Type 2 subfamily. As to quaternary structure, monomer. FMN serves as cofactor.

Its subcellular location is the cell membrane. The enzyme catalyses (S)-dihydroorotate + a quinone = orotate + a quinol. The protein operates within pyrimidine metabolism; UMP biosynthesis via de novo pathway; orotate from (S)-dihydroorotate (quinone route): step 1/1. In terms of biological role, catalyzes the conversion of dihydroorotate to orotate with quinone as electron acceptor. The sequence is that of Dihydroorotate dehydrogenase (quinone) from Rippkaea orientalis (strain PCC 8801 / RF-1) (Cyanothece sp. (strain PCC 8801)).